The primary structure comprises 730 residues: Phosphoribosylformylglycinamidine synthase subunit PurL (730 aa).

His44 is an active-site residue. Tyr47 and Lys86 together coordinate ATP. Glu88 provides a ligand contact to Mg(2+). Substrate is bound by residues 89-92 and Arg111; that span reads SHNH. The active-site Proton acceptor is His90. Residue Asp112 participates in Mg(2+) binding. Gln235 provides a ligand contact to substrate. Asp263 serves as a coordination point for Mg(2+). 307 to 309 lines the substrate pocket; it reads ESQ. ATP is bound by residues Asn489 and Gly526. Asn527 serves as a coordination point for Mg(2+). Ser529 is a binding site for substrate.

This sequence belongs to the FGAMS family. As to quaternary structure, monomer. Part of the FGAM synthase complex composed of 1 PurL, 1 PurQ and 2 PurS subunits.

Its subcellular location is the cytoplasm. The enzyme catalyses N(2)-formyl-N(1)-(5-phospho-beta-D-ribosyl)glycinamide + L-glutamine + ATP + H2O = 2-formamido-N(1)-(5-O-phospho-beta-D-ribosyl)acetamidine + L-glutamate + ADP + phosphate + H(+). It participates in purine metabolism; IMP biosynthesis via de novo pathway; 5-amino-1-(5-phospho-D-ribosyl)imidazole from N(2)-formyl-N(1)-(5-phospho-D-ribosyl)glycinamide: step 1/2. In terms of biological role, part of the phosphoribosylformylglycinamidine synthase complex involved in the purines biosynthetic pathway. Catalyzes the ATP-dependent conversion of formylglycinamide ribonucleotide (FGAR) and glutamine to yield formylglycinamidine ribonucleotide (FGAM) and glutamate. The FGAM synthase complex is composed of three subunits. PurQ produces an ammonia molecule by converting glutamine to glutamate. PurL transfers the ammonia molecule to FGAR to form FGAM in an ATP-dependent manner. PurS interacts with PurQ and PurL and is thought to assist in the transfer of the ammonia molecule from PurQ to PurL. This chain is Phosphoribosylformylglycinamidine synthase subunit PurL, found in Pelagibacter ubique (strain HTCC1062).